A 245-amino-acid polypeptide reads, in one-letter code: Putative transport permease YvfS (245 aa).

The next 6 membrane-spanning stretches (helical) occupy residues 20–40 (YFVL…TNVV), 53–73 (HYLM…TLGI), 103–123 (IGQS…GAII), 137–157 (GLWI…IGLM), 164–184 (AGIS…WMPF), and 214–234 (GSPT…FMLL). The ABC transmembrane type-2 domain maps to 20-242 (YFVLWSLIMP…LLSKYIRRKQ (223 aa)).

The protein belongs to the ABC-2 integral membrane protein family.

Its subcellular location is the cell membrane. This Bacillus subtilis (strain 168) protein is Putative transport permease YvfS (yvfS).